Here is a 157-residue protein sequence, read N- to C-terminus: Acetyltransferase PseH (157 aa).

An N-acetyltransferase domain is found at 5–152 (KNFTELNSQE…YHICLKQSDC (148 aa)).

In terms of biological role, catalyzes the third step in the biosynthesis of pseudaminic acid, a sialic-acid-like sugar that is used to modify flagellin. Mediates N-4 acetylation of UDP-4-amino-4,6-dideoxy-beta-L-AltNAc to form UDP-2,4-diacetamido-2,4,6-trideoxy-beta-L-altropyranose. The sequence is that of Acetyltransferase PseH (pseH) from Campylobacter jejuni subsp. jejuni serotype O:23/36 (strain 81-176).